The sequence spans 359 residues: Type-1 angiotensin II receptor (359 aa).

At Met-1–Asn-25 the chain is on the extracellular side. N-linked (GlcNAc...) asparagine glycosylation is present at Asn-4. The angiotensin II site is built by Gln-15 and Asp-17. 2 disulfide bridges follow: Cys-18–Cys-274 and Cys-101–Cys-180. Residues Tyr-26–Phe-55 form a helical membrane-spanning segment. Residues Tyr-56–Thr-61 lie on the Cytoplasmic side of the membrane. Residues Val-62–Ala-89 form a helical membrane-spanning segment. Residues Met-90 to Asn-98 lie on the Extracellular side of the membrane. A helical membrane pass occupies residues Tyr-99–Asp-125. Over Arg-126–Thr-141 the chain is Cytoplasmic. Residues Met-142 to Ile-165 traverse the membrane as a helical segment. The Extracellular portion of the chain corresponds to His-166–Thr-190. Arg-167 provides a ligand contact to angiotensin II. Asn-176 carries N-linked (GlcNAc...) asparagine glycosylation. Positions 182, 183, and 184 each coordinate angiotensin II. Residue Asn-188 is glycosylated (N-linked (GlcNAc...) asparagine). Residues Leu-191 to Thr-216 form a helical membrane-spanning segment. Lys-199 is an angiotensin II binding site. At Leu-217 to Phe-239 the chain is on the cytoplasmic side. The chain crosses the membrane as a helical span at residues Lys-240–Leu-268. Residues Gly-269–Asp-278 are Extracellular-facing. Residues Ile-279–Phe-304 form a helical membrane-spanning segment. At Leu-305–Glu-359 the chain is on the cytoplasmic side. Polar residues predominate over residues Thr-336–Lys-350. The interval Thr-336 to Glu-359 is disordered. Residue Cys-355 is the site of S-palmitoyl cysteine attachment.

This sequence belongs to the G-protein coupled receptor 1 family. In terms of assembly, interacts with MAS1. Interacts with ARRB1. Interacts with FLNA (via filamin repeat 21); increases PKA-mediated phosphorylation of FLNA. Post-translationally, C-terminal Ser or Thr residues may be phosphorylated. As to expression, adrenal medulla, cortex and kidney.

It is found in the cell membrane. In terms of biological role, receptor for angiotensin II, a vasoconstricting peptide, which acts as a key regulator of blood pressure and sodium retention by the kidney. The activated receptor in turn couples to G-alpha proteins G(q) (GNAQ, GNA11, GNA14 or GNA15) and thus activates phospholipase C and increases the cytosolic Ca(2+) concentrations, which in turn triggers cellular responses such as stimulation of protein kinase C. In Bos taurus (Bovine), this protein is Type-1 angiotensin II receptor (AGTR1).